Consider the following 223-residue polypeptide: Probable Brix domain-containing ribosomal biogenesis protein (223 aa).

In terms of domain architecture, Brix spans 1–196 (MMLITTSHRP…IWIMEDGRRW (196 aa)).

In terms of biological role, probably involved in the biogenesis of the ribosome. This Pyrococcus furiosus (strain ATCC 43587 / DSM 3638 / JCM 8422 / Vc1) protein is Probable Brix domain-containing ribosomal biogenesis protein.